The chain runs to 885 residues: Eukaryotic translation initiation factor 3 subunit C (885 aa).

Residues 1-81 (MSFFAKLQGS…SDSDDERQAV (81 aa)) form a disordered region. The span at 9–28 (GSDSESSSGSESEESILSGS) shows a compositional bias: low complexity. The segment covering 55–76 (EESESEEESSDEDEEEMSDSDD) has biased composition (acidic residues). One can recognise a PCI domain in the interval 624–797 (FHMHLNVELL…GVVIFHRVEQ (174 aa)). Residues 822–885 (LDVKLGNQGQ…TTMGRRVTAQ (64 aa)) form a disordered region. The span at 855-872 (RGTYRGRGGRGGRGGFNQ) shows a compositional bias: gly residues.

It belongs to the eIF-3 subunit C family. As to quaternary structure, component of the eukaryotic translation initiation factor 3 (eIF-3) complex.

The protein resides in the cytoplasm. In terms of biological role, component of the eukaryotic translation initiation factor 3 (eIF-3) complex, which is involved in protein synthesis of a specialized repertoire of mRNAs and, together with other initiation factors, stimulates binding of mRNA and methionyl-tRNAi to the 40S ribosome. The eIF-3 complex specifically targets and initiates translation of a subset of mRNAs involved in cell proliferation. In Cryptococcus neoformans var. neoformans serotype D (strain B-3501A) (Filobasidiella neoformans), this protein is Eukaryotic translation initiation factor 3 subunit C.